The following is an 85-amino-acid chain: COMM domain-containing protein 6 (85 aa).

Met1 carries the N-acetylmethionine modification. Positions 18–85 (QLVDFQWKLG…KEIAAVIETV (68 aa)) constitute a COMM domain.

This sequence belongs to the COMM domain-containing protein 6 family. As to quaternary structure, component of the commander complex consisting of the CCC subcomplex and the retriever subcomplex. Component of the CCC (COMMD/CCDC22/CCDC93) subcomplex consisting of COMMD1, COMMD2, COMMD3, COMMD4, COMMD5, COMMD6, COMMD7, COMMD8, COMMD9, COMMD10, CCDC22 and CCDC93; within the complex forms a heterodimer with COMMD1. May form a homodimer with isoform 1. Interacts with RELA, RELB, NFKB1/p105. Does not interact with NFKBIB. Interacts with CCDC22, CCDC93, SCNN1B, CUL4A. In terms of tissue distribution, ubiquitous. Expressed in brain, heart, skeletal muscle, lung, pancreas, liver, kidney, small intestine and placenta.

The protein resides in the nucleus. It localises to the cytoplasm. Functionally, scaffold protein in the commander complex that is essential for endosomal recycling of transmembrane cargos; the commander complex is composed of the CCC subcomplex and the retriever subcomplex. May modulate activity of cullin-RING E3 ubiquitin ligase (CRL) complexes. Down-regulates activation of NF-kappa-B. Inhibits TNF-induced NFKB1 activation. In Homo sapiens (Human), this protein is COMM domain-containing protein 6 (COMMD6).